The primary structure comprises 617 residues: Na(+)/H(+) antiporter NhaA 1 (617 aa).

A disordered region spans residues 1–26 (MTVTEPATQRGFPLLPSRLSRGSKAT). The segment at 1 to 433 (MTVTEPATQR…GWAIFRITDW (433 aa)) is na(+)/H(+) antiporter NhaA. The next 11 membrane-spanning stretches (helical) occupy residues 33-53 (AAALLLTFTVVAILWANSPWA), 75-95 (MTVKHVVNDALMTFFFFIVGL), 113-133 (AVPVVAAAAGLILPAVVFLAF), 141-161 (HAWGVVISTDTAFLVGALAII), 171-191 (LFLLTLAVVDDVGALIAIAVL), 198-218 (VAPLVVAVALLGALALVRYLP), 234-254 (IALYLAGIHPTLAGVAVALLI), 304-324 (VSPVVSFVILPLFALVNAGVL), 341-361 (GIVAGLVVGKFVGIAGATWLI), 378-398 (IAGGAALSGIGFTISLFIVDI), and 411-431 (IGVLAASVLAFALGWAIFRIT). Residues 434–617 (LSPPEPVGLK…LIRALEAGRG (184 aa)) enclose the Thioredoxin domain.

The protein in the N-terminal section; belongs to the NhaA Na(+)/H(+) (TC 2.A.33) antiporter family.

It is found in the cell membrane. It carries out the reaction Na(+)(in) + 2 H(+)(out) = Na(+)(out) + 2 H(+)(in). Functionally, na(+)/H(+) antiporter that extrudes sodium in exchange for external protons. This Mycolicibacterium gilvum (strain PYR-GCK) (Mycobacterium gilvum (strain PYR-GCK)) protein is Na(+)/H(+) antiporter NhaA 1.